Reading from the N-terminus, the 59-residue chain is U-limacoditoxin(3)-Dv33 (59 aa).

An N-terminal signal peptide occupies residues 1 to 19 (MSKVILLCLIFALFACSIS).

It belongs to the limacoditoxin-3 family. In terms of processing, the natural peptide is not amidated. The recombinant peptide is amidated. Expressed by the venom secretory cell of the spine. The spine is a cuticular structure containing a single large nucleated venom-secreting cell at its base. It is an independent unit capable of producing, storing and injecting venom. On the back of D.vulnerans caterpillars, spines are grouped together by 50 to 100 to form scoli, of which there are eight in D.vulnerans.

Its subcellular location is the secreted. Functionally, probable toxin. Shows a relatively potent antiparasitic activity against the major pathogenic nematode of ruminants (H.contortus, EC(50)=2.6 uM). Does not show insecticidal and antimicrobial activities. Does not induce increase in intracellular calcium in mouse DRG neurons, suggesting that it does not induce pain. The polypeptide is U-limacoditoxin(3)-Dv33 (Doratifera vulnerans (Mottled cup moth)).